The chain runs to 276 residues: MHKIFSKNNLIFFVFVAFIFVVIVLQFFVSSENATKVNLSQTFEPISWLHLLGTDDYGRDLFTRIIIGARSTLFVTVLTLIAIVVIGVTLGLFAGYKKGWIERLVLRFIDVGLSIPEFIIMIALASFFQPSLWNLVISITVIKWMNYTRLTRSIVNSEMNKPYIKMAQLFHVPTRTILIRHLTPKIIPAIIVLMVVDFGKIILYISSLSFIGLGAQPPTPEWGAMLQQGRDFISSHPIMLIAPASVIAITILIFNLTGDALRDRLLKQRGEYDESH.

5 helical membrane passes run 10–30, 73–93, 108–128, 186–206, and 238–258; these read LIFF…FFVS, LFVT…LGLF, FIDV…ASFF, IIPA…LYIS, and IMLI…NLTG. An ABC transmembrane type-1 domain is found at 69–258; sequence ARSTLFVTVL…ITILIFNLTG (190 aa).

This sequence belongs to the binding-protein-dependent transport system permease family. OppBC subfamily. As to quaternary structure, the complex is composed of two ATP-binding proteins (NikD and NikE), two transmembrane proteins (NikB and NikC) and a solute-binding protein (NikA).

It is found in the cell membrane. Part of the ABC transporter complex NikABCDE (Opp2) involved in nickel import. Probably responsible for the translocation of the substrate across the membrane. The chain is Nickel import system permease protein NikC from Staphylococcus aureus (strain Mu50 / ATCC 700699).